A 1168-amino-acid polypeptide reads, in one-letter code: Probable serine/threonine protein kinase IRE (1168 aa).

2 disordered regions span residues 1–165 (MSTT…GVES) and 377–444 (EKQN…KIQP). Residues 16 to 25 (PTTISTPTST) show a composition bias toward low complexity. Composition is skewed to basic and acidic residues over residues 39-54 (RHSD…KTDE) and 107-130 (QDDK…DARA). Composition is skewed to polar residues over residues 146-163 (QWSQ…NPGV) and 401-414 (TARS…NFRM). The C2H2-type; atypical zinc finger occupies 488 to 507 (CRICEVEIPVVHVEEHSRIC). 3 disordered regions span residues 546–566 (PRAV…DLDE), 602–622 (GTKD…PRNS), and 717–744 (SSNA…LNPR). The region spanning 754-1043 (FEIIKPISRG…AGEVKQHHFF (290 aa)) is the Protein kinase domain. ATP is bound by residues 760–768 (ISRGAFGRV) and Lys-783. The active-site Proton acceptor is the Asp-877. One can recognise an AGC-kinase C-terminal domain in the interval 1044 to 1144 (KDINWDTLAR…KNLSQLASIN (101 aa)).

The protein belongs to the protein kinase superfamily. AGC Ser/Thr protein kinase family. In terms of tissue distribution, highly expressed in roots, elongating root hair cells and pollen grains.

It catalyses the reaction L-seryl-[protein] + ATP = O-phospho-L-seryl-[protein] + ADP + H(+). It carries out the reaction L-threonyl-[protein] + ATP = O-phospho-L-threonyl-[protein] + ADP + H(+). Functionally, modulates root tip growth. May play a common role in the tip growth of plant cells. This chain is Probable serine/threonine protein kinase IRE, found in Arabidopsis thaliana (Mouse-ear cress).